The sequence spans 350 residues: Vetispiradiene synthase 3 (350 aa).

The Mg(2+) site is built by D103, D107, D246, T250, and E254. Residues 103–107 carry the DDXXD motif motif; that stretch reads DDTFD.

It belongs to the terpene synthase family. Tpsa subfamily. It depends on Mg(2+) as a cofactor.

Its subcellular location is the cytoplasm. It catalyses the reaction (2E,6E)-farnesyl diphosphate = (-)-vetispiradiene + diphosphate. The protein operates within secondary metabolite biosynthesis; terpenoid biosynthesis. Its function is as follows. Sesquiterpene synthase that catalyzes the formation of vetispiradiene from trans,trans-farnesyl diphosphate. The initial internal cyclization produces the monocyclic intermediate germacrene A. The chain is Vetispiradiene synthase 3 from Hyoscyamus muticus (Egyptian henbane).